The sequence spans 437 residues: Probable glycine dehydrogenase (decarboxylating) subunit 1 (437 aa).

Belongs to the GcvP family. N-terminal subunit subfamily. As to quaternary structure, the glycine cleavage system is composed of four proteins: P, T, L and H. In this organism, the P 'protein' is a heterodimer of two subunits.

It catalyses the reaction N(6)-[(R)-lipoyl]-L-lysyl-[glycine-cleavage complex H protein] + glycine + H(+) = N(6)-[(R)-S(8)-aminomethyldihydrolipoyl]-L-lysyl-[glycine-cleavage complex H protein] + CO2. The glycine cleavage system catalyzes the degradation of glycine. The P protein binds the alpha-amino group of glycine through its pyridoxal phosphate cofactor; CO(2) is released and the remaining methylamine moiety is then transferred to the lipoamide cofactor of the H protein. This is Probable glycine dehydrogenase (decarboxylating) subunit 1 from Thermotoga petrophila (strain ATCC BAA-488 / DSM 13995 / JCM 10881 / RKU-1).